A 440-amino-acid chain; its full sequence is tRNA(Ile)-lysidine synthase (440 aa).

19–24 is a binding site for ATP; the sequence is SGGLDS.

The protein belongs to the tRNA(Ile)-lysidine synthase family.

Its subcellular location is the cytoplasm. It catalyses the reaction cytidine(34) in tRNA(Ile2) + L-lysine + ATP = lysidine(34) in tRNA(Ile2) + AMP + diphosphate + H(+). Functionally, ligates lysine onto the cytidine present at position 34 of the AUA codon-specific tRNA(Ile) that contains the anticodon CAU, in an ATP-dependent manner. Cytidine is converted to lysidine, thus changing the amino acid specificity of the tRNA from methionine to isoleucine. In Buchnera aphidicola subsp. Acyrthosiphon pisum (strain APS) (Acyrthosiphon pisum symbiotic bacterium), this protein is tRNA(Ile)-lysidine synthase.